The chain runs to 660 residues: DNA topoisomerase I, plasmid (660 aa).

A Toprim domain is found at 1 to 110 (MKLMIIESPG…LRVTFNEITA (110 aa)). 2 residues coordinate Mg(2+): Glu-7 and Asp-79. Positions 124-550 (DVKRVAAQEA…KVHDQLNMEL (427 aa)) constitute a Topo IA-type catalytic domain. An interaction with DNA region spans residues 158–163 (SAGRVQ). Tyr-287 functions as the O-(5'-phospho-DNA)-tyrosine intermediate in the catalytic mechanism. 2 consecutive C4-type zinc fingers follow at residues 563-589 (CQECGKPLRRIPGKNGHFWGCSGYPDC) and 613-643 (CVKCGNPLKHLVKKGKGGYDFWGCSGFKEGC).

Belongs to the type IA topoisomerase family. In terms of assembly, monomer. Requires Mg(2+) as cofactor.

It carries out the reaction ATP-independent breakage of single-stranded DNA, followed by passage and rejoining.. Its function is as follows. Releases the supercoiling and torsional tension of DNA, which is introduced during the DNA replication and transcription, by transiently cleaving and rejoining one strand of the DNA duplex. Introduces a single-strand break via transesterification at a target site in duplex DNA. The scissile phosphodiester is attacked by the catalytic tyrosine of the enzyme, resulting in the formation of a DNA-(5'-phosphotyrosyl)-enzyme intermediate and the expulsion of a 3'-OH DNA strand. The free DNA strand then undergoes passage around the unbroken strand, thus removing DNA supercoils. Finally, in the religation step, the DNA 3'-OH attacks the covalent intermediate to expel the active-site tyrosine and restore the DNA phosphodiester backbone. This is DNA topoisomerase I, plasmid from Xylella fastidiosa (strain 9a5c).